The primary structure comprises 585 residues: Pyruvate kinase (585 aa).

R32 provides a ligand contact to substrate. Residues N34, S36, D66, and T67 each coordinate K(+). Residue 34-37 (NFSH) coordinates ATP. R73 and K156 together coordinate ATP. Residue E221 coordinates Mg(2+). G244, D245, and T277 together coordinate substrate. Residue D245 coordinates Mg(2+).

The protein belongs to the pyruvate kinase family. It in the C-terminal section; belongs to the PEP-utilizing enzyme family. Mg(2+) is required as a cofactor. K(+) serves as cofactor.

It carries out the reaction pyruvate + ATP = phosphoenolpyruvate + ADP + H(+). It participates in carbohydrate degradation; glycolysis; pyruvate from D-glyceraldehyde 3-phosphate: step 5/5. The polypeptide is Pyruvate kinase (pyk) (Staphylococcus aureus (strain USA300)).